Consider the following 234-residue polypeptide: N-(5'-phosphoribosyl)anthranilate isomerase (234 aa).

The interval 211–234 (RAASSSPRPVDGESPAFQRSEKAG) is disordered.

Belongs to the TrpF family.

The catalysed reaction is N-(5-phospho-beta-D-ribosyl)anthranilate = 1-(2-carboxyphenylamino)-1-deoxy-D-ribulose 5-phosphate. The protein operates within amino-acid biosynthesis; L-tryptophan biosynthesis; L-tryptophan from chorismate: step 3/5. This Afipia carboxidovorans (strain ATCC 49405 / DSM 1227 / KCTC 32145 / OM5) (Oligotropha carboxidovorans) protein is N-(5'-phosphoribosyl)anthranilate isomerase.